Consider the following 341-residue polypeptide: MAP3K12-binding inhibitory protein 1 (341 aa).

Phosphoserine is present on S91. Residues K94, K127, K137, K151, and K233 each participate in a glycyl lysine isopeptide (Lys-Gly) (interchain with G-Cter in SUMO2) cross-link. Residues 170–341 (AEINENNVRE…EADSMAAHLP (172 aa)) form an interaction with MAP3K12 region. The tract at residues 269–283 (IYQRIKKLEDKILEL) is leucine-zipper 1. K299 carries the post-translational modification N6-acetyllysine; alternate. A Glycyl lysine isopeptide (Lys-Gly) (interchain with G-Cter in SUMO2); alternate cross-link involves residue K299. Residues K302 and K323 each participate in a glycyl lysine isopeptide (Lys-Gly) (interchain with G-Cter in SUMO2) cross-link. A leucine-zipper 2 region spans residues 312–327 (LAELDEKISALKRALL).

In terms of assembly, component of the ADA2A-containing complex (ATAC), composed of KAT14, KAT2A, TADA2L, TADA3L, ZZ3, MBIP, WDR5, YEATS2, CCDC101 and DR1. In the complex, it probably interacts directly with KAT2A, KAT14 and WDR5.

Its subcellular location is the nucleus. It is found in the cytoplasm. Functionally, inhibits the MAP3K12 activity to induce the activation of the JNK/SAPK pathway. Component of the ATAC complex, a complex with histone acetyltransferase activity on histones H3 and H4. In Mus musculus (Mouse), this protein is MAP3K12-binding inhibitory protein 1 (Mbip).